The sequence spans 401 residues: Argininosuccinate synthase (401 aa).

ATP-binding positions include Ala-10–Ser-18 and Ala-38. Tyr-89 contributes to the L-citrulline binding site. Gly-119 contacts ATP. Residues Thr-121, Asn-125, and Asp-126 each coordinate L-aspartate. Asn-125 contacts L-citrulline. 5 residues coordinate L-citrulline: Arg-129, Ser-177, Ser-186, Glu-262, and Tyr-274.

The protein belongs to the argininosuccinate synthase family. Type 1 subfamily. Homotetramer.

The protein resides in the cytoplasm. The enzyme catalyses L-citrulline + L-aspartate + ATP = 2-(N(omega)-L-arginino)succinate + AMP + diphosphate + H(+). The protein operates within amino-acid biosynthesis; L-arginine biosynthesis; L-arginine from L-ornithine and carbamoyl phosphate: step 2/3. This Prochlorococcus marinus (strain MIT 9303) protein is Argininosuccinate synthase.